Here is a 142-residue protein sequence, read N- to C-terminus: Nucleoside diphosphate kinase (142 aa).

ATP is bound by residues K11, F59, R87, T93, R104, and N114. H117 acts as the Pros-phosphohistidine intermediate in catalysis.

Belongs to the NDK family. Homotetramer. The cofactor is Mg(2+).

It is found in the cytoplasm. It carries out the reaction a 2'-deoxyribonucleoside 5'-diphosphate + ATP = a 2'-deoxyribonucleoside 5'-triphosphate + ADP. It catalyses the reaction a ribonucleoside 5'-diphosphate + ATP = a ribonucleoside 5'-triphosphate + ADP. Major role in the synthesis of nucleoside triphosphates other than ATP. The ATP gamma phosphate is transferred to the NDP beta phosphate via a ping-pong mechanism, using a phosphorylated active-site intermediate. The polypeptide is Nucleoside diphosphate kinase (Wigglesworthia glossinidia brevipalpis).